A 298-amino-acid polypeptide reads, in one-letter code: Mitochondrial intermembrane space import and assembly protein 40 (298 aa).

The N-terminal 33 residues, 1-33 (MYRTALRPSQSALRAIRSTTSPSALVSSGARRF), are a transit peptide targeting the mitochondrion. At 34-52 (ASTTSAPKKKSTWKGAAVR) the chain is on the mitochondrial matrix side. Residues 53–69 (WGLAVAAVYYYNTSPIF) form a helical; Signal-anchor for type II membrane protein membrane-spanning segment. The Mitochondrial intermembrane portion of the chain corresponds to 70 to 298 (SDELPETAGT…TAANNNKKQQ (229 aa)). Residues 101–159 (RQAAEHAAARKAAQAAAKAAATPATPSESVEEQITKAEAEAEAVPEGDSKPRSESTEGV) form a disordered region. A compositionally biased stretch (low complexity) spans 110-121 (RKAAQAAAKAAA). 3 cysteine pairs are disulfide-bonded: C191-C193, C202-C235, and C212-C225. Residues 199–243 (HGPCGEEFKAAFSCFVYSTEEPKGMDCIEKFSHMQDCFRKYPEVY) form the CHCH domain. Short sequence motifs (cx9C motif) lie at residues 202–212 (CGEEFKAAFSC) and 225–235 (CIEKFSHMQDC). Residues 248–298 (ADDEEAERASAAAPAAEGTPAKEEPVENKKEEALEPATHDATAANNNKKQQ) are disordered. Residues 256 to 266 (ASAAAPAAEGT) show a composition bias toward low complexity. Basic and acidic residues predominate over residues 267–280 (PAKEEPVENKKEEA).

Monomer. Requires Cu(2+) as cofactor. Zn(2+) serves as cofactor.

Its subcellular location is the mitochondrion inner membrane. Required for the import and folding of small cysteine-containing proteins (small Tim) in the mitochondrial intermembrane space (IMS). Forms a redox cycle with ERV1 that involves a disulfide relay system. Precursor proteins to be imported into the IMS are translocated in their reduced form into the mitochondria. The oxidized form of MIA40 forms a transient intermolecular disulfide bridge with the reduced precursor protein, resulting in oxidation of the precursor protein that now contains an intramolecular disulfide bond and is able to undergo folding in the IMS. This is Mitochondrial intermembrane space import and assembly protein 40 (mia-40) from Neurospora crassa (strain ATCC 24698 / 74-OR23-1A / CBS 708.71 / DSM 1257 / FGSC 987).